A 308-amino-acid chain; its full sequence is Coenzyme PQQ synthesis protein B (308 aa).

It belongs to the PqqB family.

Its pathway is cofactor biosynthesis; pyrroloquinoline quinone biosynthesis. Functionally, may be involved in the transport of PQQ or its precursor to the periplasm. This is Coenzyme PQQ synthesis protein B from Rhodopseudomonas palustris (strain BisB5).